The following is a 343-amino-acid chain: S-adenosylmethionine:tRNA ribosyltransferase-isomerase (343 aa).

It belongs to the QueA family. In terms of assembly, monomer.

Its subcellular location is the cytoplasm. The catalysed reaction is 7-aminomethyl-7-carbaguanosine(34) in tRNA + S-adenosyl-L-methionine = epoxyqueuosine(34) in tRNA + adenine + L-methionine + 2 H(+). It participates in tRNA modification; tRNA-queuosine biosynthesis. Its function is as follows. Transfers and isomerizes the ribose moiety from AdoMet to the 7-aminomethyl group of 7-deazaguanine (preQ1-tRNA) to give epoxyqueuosine (oQ-tRNA). The chain is S-adenosylmethionine:tRNA ribosyltransferase-isomerase from Syntrophotalea carbinolica (strain DSM 2380 / NBRC 103641 / GraBd1) (Pelobacter carbinolicus).